The primary structure comprises 824 residues: MEVSKEEFLRQFGGDYGYPGAPKGVDEMRAAEFKRLEGMAYLDHAGATLYSEAQMADVLKDLASNVYGNPHSQSDSSMAASDLVTAARHQVLKYFNASPREYKCIFTSGATAALKLVGECFPWSRESCYMYTMENHNSVLGIREYALSKGATVLAVDVEEGADLAKDNGSYSLYKISRRTNQRRSKDVLSHNCQNGSLSDISGNNWNIFAFPSECNFSGQKFSLSLVKLIKEGKIPLQQQGKWMVLIDAAKGCATEPPNLTVYPADFVVCSFYKIFGYPTGLGALIVKNEAANLLNKTYFSGGTVAASIADIDFVQKRKNIEQVLEDGTISFLNIASLRHGFKIIEMLTTSAIERHTTSLATYVRNKMLDLKHSNEINVCTIYGQQYSKVEGLKMGPTITFNLKREDGSWFGYREVEKLASLFGIHLRTGCFCNPGACAKYLGLSHSDLVSNFEAGHVCWDDNDIINGKPTGAVRISFGYMSTFEDAEKFLKFLQSSFVSLPVQFNNGYMLNLNSLNLIDNSSQKAVSDIHLKSIIIYPVKSCQGFSVKSWPLTTGGLMYDREWLLQGSGGEILTQKKVPELGSIRTLIDLELGKLFIESPTRRDKLQLSLLESLADLSEEVDVFGQRYEVQSYDDRVNTWFSEAIGRPCTLVRCSSSKYRSCTYTGLRDRPCRDTQSKLNFVNEGQLLLISEESISDLNSRLNSGKGDCKQKLPVDAMRFRPNLVISGSSPYSEDNWKKLRIGEACFTSMGGCNRCQMINLHQDSGQVLKSKEPLATLASYRRKKGKILFGILLNYEDIMEGENETIAGRWLQVGQQVYPSTE.

Residue lysine 274 is modified to N6-(pyridoxal phosphate)lysine. Cysteine 433 is an active-site residue. The 168-residue stretch at 655 to 822 (CSSSKYRSCT…LQVGQQVYPS (168 aa)) folds into the MOSC domain.

It belongs to the class-V pyridoxal-phosphate-dependent aminotransferase family. MOCOS subfamily. Requires pyridoxal 5'-phosphate as cofactor.

The catalysed reaction is Mo-molybdopterin + L-cysteine + AH2 = thio-Mo-molybdopterin + L-alanine + A + H2O. The protein operates within cofactor biosynthesis; molybdopterin biosynthesis. Functionally, sulfurates the molybdenum cofactor. Sulfation of molybdenum is essential for xanthine dehydrogenase (XDH) and aldehyde oxidase (ADO) enzymes in which molybdenum cofactor is liganded by 1 oxygen and 1 sulfur atom in active form. The protein is Molybdenum cofactor sulfurase (MCSU3) of Oryza sativa subsp. japonica (Rice).